The primary structure comprises 460 residues: Nitrogenase iron-iron protein beta chain (460 aa).

Positions 20, 45, 104, and 143 each coordinate [8Fe-7S] cluster.

Belongs to the NifD/NifK/NifE/NifN family. As to quaternary structure, hexamer of two alpha, two beta, and two delta chains. Requires [8Fe-7S] cluster as cofactor.

It carries out the reaction N2 + 8 reduced [2Fe-2S]-[ferredoxin] + 16 ATP + 16 H2O = H2 + 8 oxidized [2Fe-2S]-[ferredoxin] + 2 NH4(+) + 16 ADP + 16 phosphate + 6 H(+). Its function is as follows. This iron-iron protein is part of the nitrogenase complex that catalyzes the key enzymatic reactions in nitrogen fixation. Other nitrogenase complexes utilize a molybdenum-iron protein or a vanadium-iron protein. The chain is Nitrogenase iron-iron protein beta chain (anfK) from Rhodobacter capsulatus (Rhodopseudomonas capsulata).